The chain runs to 128 residues: Mu-like prophage FluMu protein gp35 (128 aa).

The segment at 53 to 87 (TETGSQEGGEGLSKEPAGSDEQKQLRADPPSTDLN) is disordered.

This sequence to phage Mu protein gp35. In terms of assembly, monomer.

The sequence is that of Mu-like prophage FluMu protein gp35 from Haemophilus influenzae (strain ATCC 51907 / DSM 11121 / KW20 / Rd).